Consider the following 572-residue polypeptide: NADH-ubiquinone oxidoreductase chain 5 (572 aa).

The next 16 membrane-spanning stretches (helical) occupy residues 4–24, 44–64, 86–106, 107–127, 147–167, 170–190, 217–237, 239–259, 268–288, 294–314, 337–357, 372–394, 422–442, 457–477, 490–510, and 552–572; these read ISFVNLISMSLSCFLLSLYFL, IVMTFLFDWMSLLFMSFVLMI, IMLVLMFVLSMMLLIISPNLI, SILLGWDGLGLVSYCLVIYFQ, VALLLSIAWMLNYGSWNYIFY, IMQNEFEMLMIGSLVMLAAMT, SSTLVTAGVYLLIRFNIILST, WLGQLMLLLSGLTMFMAGLGA, IIALSTLSQLGLMMSILSMGF, FHLLTHALFKALLFMCAGAII, SACFNVSNLALCGMPFLAGFY, NMFSFFLYYFSTGLTVSYSFRLV, MGLLIMSIIGGSMLNWLIFPF, LFVCIVGGLFGYLISLSNLFF, FLGSMWFMPYISTYGMIFYPL, and LKIYLLLFVFWILILLILLFL.

Belongs to the complex I subunit 5 family.

It is found in the mitochondrion inner membrane. It catalyses the reaction a ubiquinone + NADH + 5 H(+)(in) = a ubiquinol + NAD(+) + 4 H(+)(out). Functionally, core subunit of the mitochondrial membrane respiratory chain NADH dehydrogenase (Complex I) that is believed to belong to the minimal assembly required for catalysis. Complex I functions in the transfer of electrons from NADH to the respiratory chain. The immediate electron acceptor for the enzyme is believed to be ubiquinone. In Drosophila melanogaster (Fruit fly), this protein is NADH-ubiquinone oxidoreductase chain 5 (mt:ND5).